A 331-amino-acid polypeptide reads, in one-letter code: HPr kinase/phosphorylase (331 aa).

Active-site residues include H153 and K174. 168–175 (GKSGLGKS) lines the ATP pocket. S175 is a Mg(2+) binding site. The active-site Proton acceptor; for phosphorylation activity. Proton donor; for dephosphorylation activity is the D192. Residues 217–226 (MEIRGLGVVD) form an important for the catalytic mechanism of both phosphorylation and dephosphorylation region. E218 is a Mg(2+) binding site. The active site involves R259. The segment at 280–285 (PIFPGK) is important for the catalytic mechanism of dephosphorylation.

The protein belongs to the HPrK/P family. Homohexamer. It depends on Mg(2+) as a cofactor.

It catalyses the reaction [HPr protein]-L-serine + ATP = [HPr protein]-O-phospho-L-serine + ADP + H(+). The enzyme catalyses [HPr protein]-O-phospho-L-serine + phosphate + H(+) = [HPr protein]-L-serine + diphosphate. In terms of biological role, catalyzes the ATP- as well as the pyrophosphate-dependent phosphorylation of a specific serine residue in HPr, a phosphocarrier protein of the phosphoenolpyruvate-dependent sugar phosphotransferase system (PTS). HprK/P also catalyzes the pyrophosphate-producing, inorganic phosphate-dependent dephosphorylation (phosphorolysis) of seryl-phosphorylated HPr (P-Ser-HPr). This Pelodictyon phaeoclathratiforme (strain DSM 5477 / BU-1) protein is HPr kinase/phosphorylase.